Here is a 132-residue protein sequence, read N- to C-terminus: MVRRFLVTLRIRRACGPPRVRVFVVHIPRLTGEWAAPGAPAAVALVLMLLRSQRLGQQPLPRRPGHDDGQRPSGGAAAAPRRGAQLRRPRHSHPTRARRCPGGLPGHAGGAAPGRGAAGRARCLGPSARGPG.

An interaction with CDK5RAP3 and MDM2 region spans residues 1 to 64 (MVRRFLVTLR…LGQQPLPRRP (64 aa)). The segment at 56–132 (GQQPLPRRPG…CLGPSARGPG (77 aa)) is disordered. Positions 71–83 (RPSGGAAAAPRRG) are enriched in low complexity. Positions 84–99 (AQLRRPRHSHPTRARR) are enriched in basic residues. The segment covering 103–117 (GLPGHAGGAAPGRGA) has biased composition (gly residues).

As to quaternary structure, does not interact with cyclins, CDK1, CDK2, CDK4, CDK5 or CDK6. Binds to BCL6, E2F1, HUWE1, MDM2, MYC, NPM1/B23, TOP1/TOPOI and UBE2I/UBC9. Interacts with TBRG1 and COMMD1. Interacts with CDKN2AIP and E4F1. Interacts with CDK5RAP3 and MDM2; form a ternary complex involved in regulation of p53/TP53. Interacts with NOP53; the interaction is direct and promotes ARF nucleoplasmic relocalization and ubiquitin-mediated proteasomal degradation. Interacts with TTF1 (via the N-terminal region (NRD) and a C-terminal region); the interaction is direct and inhibits the nucleolar localization of TTF1. Interacts with C1QBP. Post-translationally, ubiquitinated in normal cells by TRIP12 via the ubiquitin fusion degradation (UFD) pathway, a process that mediates ubiquitination at the N-terminus, regardless of the absence of lysine residues. Ubiquitination leads to its proteasomal degradation. In cancer cells, however, TRIP12 is located in a different cell compartment, preventing ubiquitination and degradation.

The protein localises to the nucleus. It localises to the nucleolus. Its subcellular location is the nucleoplasm. It is found in the mitochondrion. Its function is as follows. Capable of inducing cell cycle arrest in G1 and G2 phases. Acts as a tumor suppressor. Binds to MDM2 and blocks its nucleocytoplasmic shuttling by sequestering it in the nucleolus. This inhibits the oncogenic action of MDM2 by blocking MDM2-induced degradation of p53 and enhancing p53-dependent transactivation and apoptosis. Also induces G2 arrest and apoptosis in a p53-independent manner by preventing the activation of cyclin B1/CDC2 complexes. Binds to BCL6 and down-regulates BCL6-induced transcriptional repression. Binds to E2F1 and MYC and blocks their transcriptional activator activity but has no effect on MYC transcriptional repression. Binds to TOP1/TOPOI and stimulates its activity. This complex binds to rRNA gene promoters and may play a role in rRNA transcription and/or maturation. Interacts with NPM1/B23 and promotes its polyubiquitination and degradation, thus inhibiting rRNA processing. Plays a role in inhibiting ribosome biogenesis, perhaps by binding to the nucleolar localization sequence of transcription termination factor TTF1, and thereby preventing nucleolar localization of TTF1. Interacts with COMMD1 and promotes its 'Lys63'-linked polyubiquitination. Interacts with UBE2I/UBC9 and enhances sumoylation of a number of its binding partners including MDM2 and E2F1. Binds to HUWE1 and represses its ubiquitin ligase activity. May play a role in controlling cell proliferation and apoptosis during mammary gland development. May be involved in regulation of autophagy and caspase-independent cell death; the short-lived mitochondrial isoform is stabilized by C1QBP. The polypeptide is Tumor suppressor ARF (Homo sapiens (Human)).